Here is a 345-residue protein sequence, read N- to C-terminus: S-adenosylmethionine:tRNA ribosyltransferase-isomerase (345 aa).

It belongs to the QueA family. In terms of assembly, monomer.

The protein localises to the cytoplasm. The catalysed reaction is 7-aminomethyl-7-carbaguanosine(34) in tRNA + S-adenosyl-L-methionine = epoxyqueuosine(34) in tRNA + adenine + L-methionine + 2 H(+). It participates in tRNA modification; tRNA-queuosine biosynthesis. Transfers and isomerizes the ribose moiety from AdoMet to the 7-aminomethyl group of 7-deazaguanine (preQ1-tRNA) to give epoxyqueuosine (oQ-tRNA). In Helicobacter pylori (strain ATCC 700392 / 26695) (Campylobacter pylori), this protein is S-adenosylmethionine:tRNA ribosyltransferase-isomerase.